The following is a 244-amino-acid chain: tRNA pseudouridine synthase B (244 aa).

The active-site Nucleophile is the aspartate 46.

The protein belongs to the pseudouridine synthase TruB family. Type 1 subfamily.

It carries out the reaction uridine(55) in tRNA = pseudouridine(55) in tRNA. Functionally, responsible for synthesis of pseudouridine from uracil-55 in the psi GC loop of transfer RNAs. This chain is tRNA pseudouridine synthase B, found in Bordetella avium (strain 197N).